A 437-amino-acid chain; its full sequence is Adenylosuccinate synthetase (437 aa).

Residues 25-31 (GDEGKGK), 53-55 (GHT), and lysine 62 contribute to the GTP site. The Proton acceptor role is filled by aspartate 26. 2 residues coordinate Mg(2+): aspartate 26 and glycine 53. Residues 26-29 (DEGK) and 51-54 (NAGH) each bind IMP. Histidine 54 functions as the Proton donor in the catalytic mechanism. 4 residues coordinate IMP: threonine 141, arginine 155, asparagine 232, and threonine 247. Threonine 307 is a GTP binding site. Position 307-313 (307-313 (TTTKRPR)) interacts with substrate. Arginine 311 lines the IMP pocket. GTP is bound by residues arginine 313, 339 to 341 (KLD), and 425 to 427 (GVG).

The protein belongs to the adenylosuccinate synthetase family. As to quaternary structure, homodimer. Mg(2+) is required as a cofactor.

Its subcellular location is the cytoplasm. It carries out the reaction IMP + L-aspartate + GTP = N(6)-(1,2-dicarboxyethyl)-AMP + GDP + phosphate + 2 H(+). It functions in the pathway purine metabolism; AMP biosynthesis via de novo pathway; AMP from IMP: step 1/2. In terms of biological role, plays an important role in the salvage pathway for purine nucleotide biosynthesis. Catalyzes the first committed step in the biosynthesis of AMP from IMP. In Plasmodium knowlesi (strain H), this protein is Adenylosuccinate synthetase.